Reading from the N-terminus, the 176-residue chain is MDLPGLIHDFLLVFLGLGLILGGLGVVLLTNPIYSAFSLGLVLVCISLFYILSNSHFVAAAQLLIYVGAINVLIIFAVMFMNGSEYYKDFNLWTVGSGVTSLVCTSIFVSLITIIPDTSWYGIIWTTKTNQIIEQDLISNGQQIGIHLSTDFFLPFEFISIILLVALIGAIAVARQ.

5 helical membrane-spanning segments follow: residues 10-30 (FLLV…VLLT), 32-52 (PIYS…FYIL), 61-81 (AQLL…VMFM), 95-115 (VGSG…ITII), and 152-172 (FFLP…GAIA).

This sequence belongs to the complex I subunit 6 family. NDH is composed of at least 16 different subunits, 5 of which are encoded in the nucleus.

The protein localises to the plastid. The protein resides in the chloroplast thylakoid membrane. The catalysed reaction is a plastoquinone + NADH + (n+1) H(+)(in) = a plastoquinol + NAD(+) + n H(+)(out). It catalyses the reaction a plastoquinone + NADPH + (n+1) H(+)(in) = a plastoquinol + NADP(+) + n H(+)(out). In terms of biological role, NDH shuttles electrons from NAD(P)H:plastoquinone, via FMN and iron-sulfur (Fe-S) centers, to quinones in the photosynthetic chain and possibly in a chloroplast respiratory chain. The immediate electron acceptor for the enzyme in this species is believed to be plastoquinone. Couples the redox reaction to proton translocation, and thus conserves the redox energy in a proton gradient. In Manihot esculenta (Cassava), this protein is NAD(P)H-quinone oxidoreductase subunit 6, chloroplastic (ndhG).